A 233-amino-acid polypeptide reads, in one-letter code: tRNA (guanine-N(7)-)-methyltransferase (233 aa).

Residues 1–22 are disordered; that stretch reads MIDENHPMRAAGNFFGRRHGKP. Positions 64, 89, 116, and 138 each coordinate S-adenosyl-L-methionine. Residue Asp138 is part of the active site. Residues Lys142, Asp174, and 212–215 each bind substrate; that span reads TRYE.

This sequence belongs to the class I-like SAM-binding methyltransferase superfamily. TrmB family.

The catalysed reaction is guanosine(46) in tRNA + S-adenosyl-L-methionine = N(7)-methylguanosine(46) in tRNA + S-adenosyl-L-homocysteine. The protein operates within tRNA modification; N(7)-methylguanine-tRNA biosynthesis. Catalyzes the formation of N(7)-methylguanine at position 46 (m7G46) in tRNA. The protein is tRNA (guanine-N(7)-)-methyltransferase of Brucella abortus (strain 2308).